The sequence spans 366 residues: MISSFHRPTVARVNLQAIKENVASVQKHIPLGVKTYAVVKADAYGHGAVQVSKALLPQVDGYCVSNLDEALQLRQAGIDKEILILGVLLPNELELAVANAITVTIASLDWIALARLEKKECQGLKVHVKVDSGMGRIGLRSSKEVNLLIDSLKELGADVEGIFTHFATADEADDTKFNQQLQFFKKLIAGLEDKPRLVHASNSATSIWHSDTIFNAVRLGIVSYGLNPSGSNLSLPFPLQEALSLESSLVHVKMISAGDTVGYGATYTAKKSEYVGTVPIGYADGWTRNMQGFSVLVDGQFCEIIGRVSMDQLTIRLSKAYPLGTKVTLIGSNQQKNISTTDIANYRNTINYEVLCLLSDRIPRIY.

The active-site Proton acceptor; specific for D-alanine is Lys-40. Residue Lys-40 is modified to N6-(pyridoxal phosphate)lysine. Arg-136 is a substrate binding site. Catalysis depends on Tyr-263, which acts as the Proton acceptor; specific for L-alanine. Residue Met-310 coordinates substrate.

The protein belongs to the alanine racemase family. It depends on pyridoxal 5'-phosphate as a cofactor.

The catalysed reaction is L-alanine = D-alanine. Its pathway is amino-acid biosynthesis; D-alanine biosynthesis; D-alanine from L-alanine: step 1/1. Catalyzes the interconversion of L-alanine and D-alanine. May also act on other amino acids. This is Alanine racemase (alr) from Streptococcus pyogenes serotype M2 (strain MGAS10270).